Here is a 161-residue protein sequence, read N- to C-terminus: ATP synthase subunit b 2 (161 aa).

A helical transmembrane segment spans residues Ile13–Pro33.

The protein belongs to the ATPase B chain family. In terms of assembly, F-type ATPases have 2 components, F(1) - the catalytic core - and F(0) - the membrane proton channel. F(1) has five subunits: alpha(3), beta(3), gamma(1), delta(1), epsilon(1). F(0) has three main subunits: a(1), b(2) and c(10-14). The alpha and beta chains form an alternating ring which encloses part of the gamma chain. F(1) is attached to F(0) by a central stalk formed by the gamma and epsilon chains, while a peripheral stalk is formed by the delta and b chains.

Its subcellular location is the cell inner membrane. Its function is as follows. F(1)F(0) ATP synthase produces ATP from ADP in the presence of a proton or sodium gradient. F-type ATPases consist of two structural domains, F(1) containing the extramembraneous catalytic core and F(0) containing the membrane proton channel, linked together by a central stalk and a peripheral stalk. During catalysis, ATP synthesis in the catalytic domain of F(1) is coupled via a rotary mechanism of the central stalk subunits to proton translocation. Functionally, component of the F(0) channel, it forms part of the peripheral stalk, linking F(1) to F(0). The b'-subunit is a diverged and duplicated form of b found in plants and photosynthetic bacteria. This is ATP synthase subunit b 2 (atpF2) from Rhodospirillum rubrum (strain ATCC 11170 / ATH 1.1.1 / DSM 467 / LMG 4362 / NCIMB 8255 / S1).